We begin with the raw amino-acid sequence, 882 residues long: Formin-like protein 9 (882 aa).

The signal sequence occupies residues 1–19 (MGMAMRCVLVLFSVSPVLL). The segment at 67-92 (SRGRRHKRYSEAPAPAPAPVPAHQAR) is disordered. A helical transmembrane segment spans residues 138 to 158 (IVALGVVGLCLVVLGVVIAAF). Disordered regions lie at residues 178–202 (RHGSRDQRSPAATRKVSSHPSPDPL), 293–316 (THDSPSDSSYQSLSPDCTSRLSPK), and 401–471 (TMTN…PLPR). Positions 298–308 (SDSSYQSLSPD) are enriched in low complexity. A compositionally biased stretch (pro residues) spans 427-441 (KPAPPPPPQKNPPPN). An FH2 domain is found at 462–882 (VGKDGSPLPR…QTLNLVLPLK (421 aa)).

Belongs to the formin-like family. Class-I subfamily.

The protein resides in the membrane. The polypeptide is Formin-like protein 9 (FH9) (Oryza sativa subsp. japonica (Rice)).